The following is a 147-amino-acid chain: Peptide methionine sulfoxide reductase MsrB (147 aa).

Residues 8–131 enclose the MsrB domain; the sequence is KEELKKILTE…NSASLKFIPK (124 aa). Catalysis depends on C120, which acts as the Nucleophile.

The protein belongs to the MsrB Met sulfoxide reductase family.

The enzyme catalyses L-methionyl-[protein] + [thioredoxin]-disulfide + H2O = L-methionyl-(R)-S-oxide-[protein] + [thioredoxin]-dithiol. This chain is Peptide methionine sulfoxide reductase MsrB, found in Clostridium perfringens (strain SM101 / Type A).